Here is a 72-residue protein sequence, read N- to C-terminus: Large ribosomal subunit protein uL30 (72 aa).

It belongs to the universal ribosomal protein uL30 family. In terms of assembly, part of the 50S ribosomal subunit.

The sequence is that of Large ribosomal subunit protein uL30 from Mycobacterium ulcerans (strain Agy99).